We begin with the raw amino-acid sequence, 342 residues long: RNA 3'-terminal phosphate cyclase (342 aa).

ATP contacts are provided by residues Gln103 and 283–287 (YLADQ). His308 serves as the catalytic Tele-AMP-histidine intermediate.

The protein belongs to the RNA 3'-terminal cyclase family. Type 1 subfamily.

The protein resides in the cytoplasm. The enzyme catalyses a 3'-end 3'-phospho-ribonucleotide-RNA + ATP = a 3'-end 2',3'-cyclophospho-ribonucleotide-RNA + AMP + diphosphate. Functionally, catalyzes the conversion of 3'-phosphate to a 2',3'-cyclic phosphodiester at the end of RNA. The mechanism of action of the enzyme occurs in 3 steps: (A) adenylation of the enzyme by ATP; (B) transfer of adenylate to an RNA-N3'P to produce RNA-N3'PP5'A; (C) and attack of the adjacent 2'-hydroxyl on the 3'-phosphorus in the diester linkage to produce the cyclic end product. The biological role of this enzyme is unknown but it is likely to function in some aspects of cellular RNA processing. This is RNA 3'-terminal phosphate cyclase from Shigella dysenteriae serotype 1 (strain Sd197).